We begin with the raw amino-acid sequence, 259 residues long: Glucosamine-6-phosphate deaminase (259 aa).

The active-site Proton acceptor; for enolization step is the Asp-66. The active-site For ring-opening step is Asp-135. The active-site Proton acceptor; for ring-opening step is the His-137. Glu-142 serves as the catalytic For ring-opening step.

The protein belongs to the glucosamine/galactosamine-6-phosphate isomerase family. NagB subfamily.

The enzyme catalyses alpha-D-glucosamine 6-phosphate + H2O = beta-D-fructose 6-phosphate + NH4(+). Its pathway is amino-sugar metabolism; N-acetylneuraminate degradation; D-fructose 6-phosphate from N-acetylneuraminate: step 5/5. In terms of biological role, catalyzes the reversible isomerization-deamination of glucosamine 6-phosphate (GlcN6P) to form fructose 6-phosphate (Fru6P) and ammonium ion. The sequence is that of Glucosamine-6-phosphate deaminase from Pseudarthrobacter chlorophenolicus (strain ATCC 700700 / DSM 12829 / CIP 107037 / JCM 12360 / KCTC 9906 / NCIMB 13794 / A6) (Arthrobacter chlorophenolicus).